The sequence spans 427 residues: 3-phosphoshikimate 1-carboxyvinyltransferase (427 aa).

3 residues coordinate 3-phosphoshikimate: Lys20, Ser21, and Arg25. Lys20 contacts phosphoenolpyruvate. Phosphoenolpyruvate is bound by residues Gly92 and Arg120. 4 residues coordinate 3-phosphoshikimate: Ser166, Gln168, Asp312, and Lys339. Gln168 contributes to the phosphoenolpyruvate binding site. The active-site Proton acceptor is the Asp312. Residues Arg343 and Arg385 each coordinate phosphoenolpyruvate.

This sequence belongs to the EPSP synthase family. As to quaternary structure, monomer.

It is found in the cytoplasm. The catalysed reaction is 3-phosphoshikimate + phosphoenolpyruvate = 5-O-(1-carboxyvinyl)-3-phosphoshikimate + phosphate. Its pathway is metabolic intermediate biosynthesis; chorismate biosynthesis; chorismate from D-erythrose 4-phosphate and phosphoenolpyruvate: step 6/7. Catalyzes the transfer of the enolpyruvyl moiety of phosphoenolpyruvate (PEP) to the 5-hydroxyl of shikimate-3-phosphate (S3P) to produce enolpyruvyl shikimate-3-phosphate and inorganic phosphate. The chain is 3-phosphoshikimate 1-carboxyvinyltransferase from Streptococcus equi subsp. equi (strain 4047).